Here is a 557-residue protein sequence, read N- to C-terminus: Tryptophan 2-monooxygenase (557 aa).

Residues Ser-49, Glu-69, Arg-71, Arg-77, and Arg-98 each contribute to the FMN site. Arg-98 is a binding site for substrate.

It belongs to the tryptophan 2-monooxygenase family. As to quaternary structure, monomer. The cofactor is FMN.

It catalyses the reaction L-tryptophan + O2 = indole-3-acetamide + CO2 + H2O. The protein operates within plant hormone metabolism; auxin biosynthesis. The polypeptide is Tryptophan 2-monooxygenase (iaaM) (Pseudomonas savastanoi (Pseudomonas syringae pv. savastanoi)).